Here is a 525-residue protein sequence, read N- to C-terminus: Probable metalloreductase AIM14 (525 aa).

The next 7 membrane-spanning stretches (helical) occupy residues 13-33 (NIKY…YIAV), 52-72 (PLWL…VIHV), 82-102 (FGRL…RPSP), 118-138 (LGRL…VHFV), 152-172 (FLGV…LPFF), 179-199 (LFYT…IFHA), and 203-223 (VGWL…YRVL). In terms of domain architecture, Ferric oxidoreductase spans 82 to 194 (FGRLCYALLP…YLSAWFVAIA (113 aa)). Positions 215 to 344 (GSSLLYRVLA…GGAGISFALP (130 aa)) constitute an FAD-binding FR-type domain. The interval 407-478 (LLSEDMEMEE…YHDGRPQPAD (72 aa)) is disordered. Residues 410–438 (EDMEMEEIGQEDEDRERDELDDLLSEDEG) are compositionally biased toward acidic residues. Residues 453 to 463 (GKDQDNGKREA) show a composition bias toward basic and acidic residues.

It belongs to the ferric reductase (FRE) family. AIM14 subfamily.

It localises to the membrane. Its function is as follows. Probable cell surface metalloreductase. May be involved in iron or copper homeostasis. This chain is Probable metalloreductase AIM14 (AIM14), found in Yarrowia lipolytica (strain CLIB 122 / E 150) (Yeast).